We begin with the raw amino-acid sequence, 317 residues long: Ubiquinone biosynthesis protein COQ9, mitochondrial (317 aa).

The transit peptide at 1–46 directs the protein to the mitochondrion; that stretch reads MAASVARVLKAAGGRQLLLMVARRRPVLRQPFLLMPRKFWGTSALR. The tract at residues 45–97 is disordered; that stretch reads LRSEDQKQPPFSSTSAHAGTPEHAEEQYQQQQPPPRYTDQAGEESEGYESEEQ. The span at 85–96 shows a compositional bias: acidic residues; the sequence is AGEESEGYESEE. Arg-243 serves as a coordination point for a 1,2-diacylglycero-3-phosphoethanolamine.

This sequence belongs to the COQ9 family. As to quaternary structure, homodimer. Heterodimer; two heterodimers of COQ7:COQ9 come together on the same side of the lipid pseudo-bilayer and form a curved tetramer with a hydrophobic surface suitable for membrane interaction. These two tetramers assemble into a soluble octamer with a pseudo-bilayer of lipids captured within. Interacts with COQ7; this interaction allows ubiquinone (CoQ) isoprene intermediates presentation to COQ7 and facilitates the COQ7-mediated hydroxylase step.

Its subcellular location is the mitochondrion. It participates in cofactor biosynthesis; ubiquinone biosynthesis. Its function is as follows. Membrane-associated protein that warps the membrane surface to access and bind aromatic isoprenes with high specificity, including ubiquinone (CoQ) isoprene intermediates and presents them directly to COQ7, therefore facilitating the COQ7-mediated hydroxylase step. Participates in the biosynthesis of coenzyme Q, also named ubiquinone, an essential lipid-soluble electron transporter for aerobic cellular respiration. The sequence is that of Ubiquinone biosynthesis protein COQ9, mitochondrial from Xenopus tropicalis (Western clawed frog).